The following is a 739-amino-acid chain: Polyribonucleotide nucleotidyltransferase (739 aa).

The Mg(2+) site is built by Asp488 and Asp494. The KH domain occupies 555–614 (PKIVTLKINPDKIRDVIGPGGKVINGIIDETGVKIDIDQDGTVFIASTDQDGINHARQLI). One can recognise an S1 motif domain in the interval 624–692 (GEEFDGTVRR…DKGRVNASHK (69 aa)). Residues 698–739 (GMSPEDRAAYDEKKKTERDSRPPRRDTGSRPPRDGQRPPRRN) are disordered. Over residues 701–739 (PEDRAAYDEKKKTERDSRPPRRDTGSRPPRDGQRPPRRN) the composition is skewed to basic and acidic residues.

Belongs to the polyribonucleotide nucleotidyltransferase family. It depends on Mg(2+) as a cofactor.

It localises to the cytoplasm. It carries out the reaction RNA(n+1) + phosphate = RNA(n) + a ribonucleoside 5'-diphosphate. Its function is as follows. Involved in mRNA degradation. Catalyzes the phosphorolysis of single-stranded polyribonucleotides processively in the 3'- to 5'-direction. This is Polyribonucleotide nucleotidyltransferase from Exiguobacterium sibiricum (strain DSM 17290 / CCUG 55495 / CIP 109462 / JCM 13490 / 255-15).